The following is a 117-amino-acid chain: Membrane-anchored ubiquitin-fold protein 1 (117 aa).

A Ubiquitin-like domain is found at 8-74; that stretch reads LEIKFRLTDG…LENSKTVKDY (67 aa). The S-palmitoyl cysteine moiety is linked to residue Cys112. A Cysteine methyl ester modification is found at Cys114. A lipid anchor (S-farnesyl cysteine) is attached at Cys114. The propeptide at 115 to 117 is removed in mature form; it reads SVM.

It is found in the cell membrane. May serve as docking site to facilitate the association of other proteins to the plasma membrane. In Arabidopsis thaliana (Mouse-ear cress), this protein is Membrane-anchored ubiquitin-fold protein 1 (MUB1).